Consider the following 894-residue polypeptide: Exocyst complex component 2 (894 aa).

One can recognise an IPT/TIG domain in the interval 5-89 (PVVTGLSPKE…GTSTVQFRAY (85 aa)). Positions 398–413 (HTSKDSGAQEKAKNRD) are enriched in basic and acidic residues. The interval 398–417 (HTSKDSGAQEKAKNRDSSQA) is disordered.

This sequence belongs to the SEC5 family. In terms of assembly, the exocyst complex is composed of Sec3/Exoc1, Sec5/Exoc2, Sec6/Exoc3, Sec8/Exoc4, Sec10/Exoc5, Sec15/Exoc6, Exo70/Exoc7 and Exo84/Exoc8.

Functionally, component of the exocyst complex involved in the docking of exocytic vesicles with fusion sites on the plasma membrane. The polypeptide is Exocyst complex component 2 (Drosophila melanogaster (Fruit fly)).